A 604-amino-acid chain; its full sequence is Sulfite reductase [NADPH] flavoprotein alpha-component (604 aa).

Positions 65 to 203 (VTILYGSQTG…AAGQWHADVL (139 aa)) constitute a Flavodoxin-like domain. Residues 71–76 (SQTGNG), 118–121 (STHG), and 154–163 (LGDSSYEFFC) contribute to the FMN site. In terms of domain architecture, FAD-binding FR-type spans 236-453 (QNPYSAEVLV…VEPNKHFRLP (218 aa)). Residues threonine 324, leucine 358, 392–395 (RLYS), 410–412 (TVA), and 425–428 (GGAS) each bind FAD. Residues 524–525 (SR), 530–534 (KIYVQ), and aspartate 566 contribute to the NADP(+) site. Tyrosine 604 lines the FAD pocket.

The protein belongs to the NADPH-dependent sulphite reductase flavoprotein subunit CysJ family. In the N-terminal section; belongs to the flavodoxin family. This sequence in the C-terminal section; belongs to the flavoprotein pyridine nucleotide cytochrome reductase family. As to quaternary structure, alpha(8)-beta(8). The alpha component is a flavoprotein, the beta component is a hemoprotein. Requires FAD as cofactor. It depends on FMN as a cofactor.

The enzyme catalyses hydrogen sulfide + 3 NADP(+) + 3 H2O = sulfite + 3 NADPH + 4 H(+). The protein operates within sulfur metabolism; hydrogen sulfide biosynthesis; hydrogen sulfide from sulfite (NADPH route): step 1/1. Functionally, component of the sulfite reductase complex that catalyzes the 6-electron reduction of sulfite to sulfide. This is one of several activities required for the biosynthesis of L-cysteine from sulfate. The flavoprotein component catalyzes the electron flow from NADPH -&gt; FAD -&gt; FMN to the hemoprotein component. This is Sulfite reductase [NADPH] flavoprotein alpha-component from Shewanella sp. (strain ANA-3).